The following is a 470-amino-acid chain: Putative ankyrin repeat protein L279 (470 aa).

ANK repeat units lie at residues 119–148 (RDDYMLEWACAGNFTEVARYLLKIGANPGT), 149–178 (NKYACFESAVRNGNYDMVKLLLENIPGSDK), 372–401 (ETQGLLTNACQYNNSELVKYLLEKGANVNE), and 403–431 (NGKPLREAIKNNNKDIIKNLMDYSPDISL).

The sequence is that of Putative ankyrin repeat protein L279 from Acanthamoeba polyphaga (Amoeba).